The following is a 449-amino-acid chain: MSVTASTLVLAAPVDPDLSGFGDDPFWLILLKGVAVFAFLLLMTLFSIVFERKVVAKMQQRVGPNRHGPKGWLQSLADGAKLMLKEDLIPALADKPIFILAPILSAVPAFLAFAVIPFGPEVSIFGERTTLQLADLPVSVLYMLAAASLGVYGLILSGWSSGSTYPLLGSLRSAAQIISYEVAMGLSFVAVFIYAGTLSTSGIVESQSGRWYIALVPSFVLYCISMVGETNRTPFDLPEAEGELVGGFHTEYSSIKFAFFFLAEYINMVTVSAIATTLFLGGWQPPPIPGLSGLDHGWVPLIWFVLKLLLFLFFFIWLRGTLPRLRYDQFMAFGWKVLIPVGLLWVLVIATFRVYQKDVDDRTPWLIGAGVVIGIMLIVALLDPGGAKHQRELEEAERRKLAEAPSLESIPWPPPPPGGAHHRPAVPAGTSANGSSTVIPADPPPRQES.

A run of 9 helical transmembrane segments spans residues phenylalanine 26–phenylalanine 46, proline 96–isoleucine 116, leucine 136–leucine 156, isoleucine 177–threonine 197, tryptophan 211–asparagine 231, phenylalanine 259–phenylalanine 279, tryptophan 298–leucine 318, phenylalanine 330–alanine 350, and tryptophan 365–glycine 385. The disordered stretch occupies residues alanine 396 to serine 449.

The protein belongs to the complex I subunit 1 family. As to quaternary structure, NDH-1 is composed of 14 different subunits. Subunits NuoA, H, J, K, L, M, N constitute the membrane sector of the complex.

The protein resides in the cell membrane. It catalyses the reaction a quinone + NADH + 5 H(+)(in) = a quinol + NAD(+) + 4 H(+)(out). NDH-1 shuttles electrons from NADH, via FMN and iron-sulfur (Fe-S) centers, to quinones in the respiratory chain. The immediate electron acceptor for the enzyme in this species is believed to be ubiquinone. Couples the redox reaction to proton translocation (for every two electrons transferred, four hydrogen ions are translocated across the cytoplasmic membrane), and thus conserves the redox energy in a proton gradient. This subunit may bind ubiquinone. In Frankia alni (strain DSM 45986 / CECT 9034 / ACN14a), this protein is NADH-quinone oxidoreductase subunit H.